A 1182-amino-acid chain; its full sequence is MSMGRSPSTTFRSRTGSHGARDLIAGHGRNSRRISQMHVNILHPQLQTMVEQWQMRERPSLETENGKGSLLLENEGVADIITMCPFGEVISVVFPWFLANVRTSLEIKLSDFKHQLFELIAPMKWGTYSVKPQDYVFRQLNNFGEIEVIFNDDQPLSKLELHGTFPMLFLYQPDGINRDKELMSDISHCLGYSLDKLEESLDEELRQFRASLWARTKKTCLTRGLEGTSHYAFPEEQYLCVGESCPKDLESKVKAAKLSYQMFWRKRKAEINGVCEKMMKIQIEFNPNETPKSLLHTFLYEMRKLDVYDTDDPADEGWFLQLAGRTTFVTNPDVKLTSYDGVRSELESYRCPGFVVRRQSLVLKDYCRPKPLYEPHYVRAHERKLALDVLSVSIDSTPKQSKNSDMVMTDFRPTASLKQVSLWDLDANLMIRPVNISGFDFPADVDMYVRIEFSVYVGTLTLASKSTTKVNAQFAKWNKEMYTFDLYMKDMPPSAVLSIRVLYGKVKLKSEEFEVGWVNMSLTDWRDELRQGQFLFHLWAPEPTANRSRIGENGARIGTNAAVTIEISSYGGRVRMPSQGQYTYLVKHRSTWTETLNIMGDDYESCIRDPGYKKLQMLVKKHESGIVLEEDEQRHVWMWRRYIQKQEPDLLIVLSELAFVWTDRENFSELYVMLEKWKPPSVAAALTLLGKRCTDRVIRKFAVEKLNEQLSPVTFHLFILPLIQALKYEPRAQSEVGMMLLTRALCDYRIGHRLFWLLRAEIARLRDCDLKSEEYRRISLLMEAYLRGNEEHIKIITRQVDMVDELTRISTLVKGMPKDVATMKLRDELRSISHKMENMDSPLDPVYKLGEMIIDKAIVLGSAKRPLMLHWKNKNPKSDLHLPFCAMIFKNGDDLRQDMLVLQVLEVMDNIWKAANIDCCLNPYAVLPMGEMIGIIEVVPNCKTIFEIQVGTGFMNTAVRSIDPSFMNKWIRKQCGIEDEKKKSKKDSTKNPIEKKIDNTQAMKKYFESVDRFLYSCVGYSVATYIMGIKDRHSDNLMLTEDGKYFHIDFGHILGHGKTKLGIQRDRQPFILTEHFMTVIRSGKSVDGNSHELQKFKTLCVEAYEVMWNNRDLFVSLFTLMLGMELPELSTKADLDHLKKTLFCNGESKEEARKFFAGIYEEAFNGSWSTKTNWLFHAVKHY.

Polar residues predominate over residues 1 to 16 (MSMGRSPSTTFRSRTG). A disordered region spans residues 1-24 (MSMGRSPSTTFRSRTGSHGARDLI). The region spanning 74-174 (NEGVADIITM…FPMLFLYQPD (101 aa)) is the PI3K-ABD domain. Positions 266–358 (KRKAEINGVC…YRCPGFVVRR (93 aa)) constitute a PI3K-RBD domain. In terms of domain architecture, C2 PI3K-type spans 425–577 (LDANLMIRPV…SSYGGRVRMP (153 aa)). The region spanning 601–788 (DDYESCIRDP…SLLMEAYLRG (188 aa)) is the PIK helical domain. The 316-residue stretch at 853-1168 (IIDKAIVLGS…IYEEAFNGSW (316 aa)) folds into the PI3K/PI4K catalytic domain. A G-loop region spans residues 859 to 865 (VLGSAKR). Residues 1028–1036 (GIKDRHSDN) form a catalytic loop region. Residues 1047–1073 (HIDFGHILGHGKTKLGIQRDRQPFILT) are activation loop.

It belongs to the PI3/PI4-kinase family.

It carries out the reaction a 1,2-diacyl-sn-glycero-3-phospho-(1D-myo-inositol) + ATP = a 1,2-diacyl-sn-glycero-3-phospho-(1D-myo-inositol-3-phosphate) + ADP + H(+). Functionally, phosphatidylinositol 3-kinase homolog that regulates longevity and diapause. Promotes cell survival during embryonic development by recruiting akt-1/2 to the plasma membrane through the production of PtdIns(3,4,5)P3. Could function in the development or neuroendocrine signaling of the dauer pathway. Mediates susceptibility to enteropathogenic E.coli infection. May negatively regulate AYI interneuron neurite outgrowth. Plays a role in aversive olfactory learning when an odor is associated with food deprivation. Regulates this process by promoting the nuclear relocalization of egl-4 in AWC olfactory neurons after odor conditioning. This is Phosphatidylinositol 3-kinase age-1 from Caenorhabditis elegans.